We begin with the raw amino-acid sequence, 313 residues long: DNA-directed RNA polymerase subunit alpha (313 aa).

The interval 1-227 is alpha N-terminal domain (alpha-NTD); sequence MMLDVAPPRF…DFFGLFAEGY (227 aa). An alpha C-terminal domain (alpha-CTD) region spans residues 242–313; sequence RPVITDERPI…YGYTLESGRE (72 aa).

Belongs to the RNA polymerase alpha chain family. Homodimer. The RNAP catalytic core consists of 2 alpha, 1 beta, 1 beta' and 1 omega subunit. When a sigma factor is associated with the core the holoenzyme is formed, which can initiate transcription.

It carries out the reaction RNA(n) + a ribonucleoside 5'-triphosphate = RNA(n+1) + diphosphate. In terms of biological role, DNA-dependent RNA polymerase catalyzes the transcription of DNA into RNA using the four ribonucleoside triphosphates as substrates. The chain is DNA-directed RNA polymerase subunit alpha from Rubrobacter xylanophilus (strain DSM 9941 / JCM 11954 / NBRC 16129 / PRD-1).